A 196-amino-acid polypeptide reads, in one-letter code: Guanylate kinase (196 aa).

Residues 7–191 enclose the Guanylate kinase-like domain; the sequence is RNIVLLVGPS…AAEEIEKIIL (185 aa). 14-21 contributes to the ATP binding site; sequence GPSGVGKG.

This sequence belongs to the guanylate kinase family.

The protein resides in the cytoplasm. The enzyme catalyses GMP + ATP = GDP + ADP. Essential for recycling GMP and indirectly, cGMP. The protein is Guanylate kinase of Mycoplasmopsis pulmonis (strain UAB CTIP) (Mycoplasma pulmonis).